An 88-amino-acid polypeptide reads, in one-letter code: Small ribosomal subunit protein bS20 (88 aa).

It belongs to the bacterial ribosomal protein bS20 family.

Functionally, binds directly to 16S ribosomal RNA. The polypeptide is Small ribosomal subunit protein bS20 (Aromatoleum aromaticum (strain DSM 19018 / LMG 30748 / EbN1) (Azoarcus sp. (strain EbN1))).